We begin with the raw amino-acid sequence, 127 residues long: Glycine cleavage system H protein (127 aa).

Positions 22 to 104 (KARIGITHFA…YEKAWMIVVE (83 aa)) constitute a Lipoyl-binding domain. An N6-lipoyllysine modification is found at Lys-63.

Belongs to the GcvH family. In terms of assembly, the glycine cleavage system is composed of four proteins: P, T, L and H. The cofactor is (R)-lipoate.

Its function is as follows. The glycine cleavage system catalyzes the degradation of glycine. The H protein shuttles the methylamine group of glycine from the P protein to the T protein. Functionally, is also involved in protein lipoylation via its role as an octanoyl/lipoyl carrier protein intermediate. This is Glycine cleavage system H protein from Bacillus subtilis (strain 168).